Consider the following 462-residue polypeptide: Calcitonin gene-related peptide type 1 receptor (462 aa).

The N-terminal stretch at 1-22 (MEKKYILYFLFLLPFFMILVIA) is a signal peptide. Residues 23–140 (ETEEENPDDL…NTHEKVQTAL (118 aa)) lie on the Extracellular side of the membrane. Intrachain disulfides connect C49-C75, C66-C106, and C89-C128. Residues N67, N119, and N124 are each glycosylated (N-linked (GlcNAc...) asparagine). Residues 141–165 (NLFYLTIIGHGLSIASLLISLGIFF) traverse the membrane as a helical segment. At 166 to 176 (YFKSLSCQRIT) the chain is on the cytoplasmic side. Residues 177-199 (LHKNLFFSFVCNSIVTIIHLTAV) traverse the membrane as a helical segment. Topologically, residues 200-210 (ANNQALVATNP) are extracellular. Residues 211–239 (VSCKVFQFIHLYLMGCNYFWMLCEGIYLH) form a helical membrane-spanning segment. The Cytoplasmic portion of the chain corresponds to 240–253 (TLIVVAVFAEKQHL). The chain crosses the membrane as a helical span at residues 254–274 (MWYYFLGWGFPLIPACIHAVA). Topologically, residues 275–290 (RRLYYNDNCWISSDTH) are extracellular. Positions 289-290 (TH) are required for RAMP3 interaction. A helical transmembrane segment spans residues 291–315 (LLYIIHGPICAALLVNLFFLLNIVR). The Cytoplasmic segment spans residues 316 to 330 (VLITKLKVTHQAESN). The chain crosses the membrane as a helical span at residues 331-352 (LYMKAVRATLILVPLLGIEFVL). Residues 353–367 (IPWRPEGKIAEEVYD) are Extracellular-facing. Residues 368–388 (YIMHILVHYQGLLVSTIYCFF) traverse the membrane as a helical segment. Over 389-462 (NGEVQAILRR…IVIKPEKLYD (74 aa)) the chain is Cytoplasmic. Phosphoserine occurs at positions 421 and 446.

It belongs to the G-protein coupled receptor 2 family. As to quaternary structure, heterodimer of CALCRL and RAMP1; the receptor complex functions as CGRP receptor. Heterodimer of CALCRL and RAMP2 or CALCRL and RAMP3; the complexes function as adrenomedullin receptor. In terms of tissue distribution, detected in lung and coronary artery.

It is found in the cell membrane. In terms of biological role, g protein-coupled receptor which specificity is determined by its interaction with receptor-activity-modifying proteins (RAMPs). Together with RAMP1, form the receptor complex for calcitonin-gene-related peptides CALCA/CGRP1 and CALCB/CGRP2. Together with RAMP2 or RAMP3, function as receptor complexes for adrenomedullin (ADM and ADM2). Ligand binding causes a conformation change that triggers signaling via guanine nucleotide-binding proteins (G proteins) and modulates the activity of downstream effectors. Activates cAMP-dependent pathway. In Sus scrofa (Pig), this protein is Calcitonin gene-related peptide type 1 receptor (CALCRL).